The primary structure comprises 84 residues: RNA-binding protein Hfq (84 aa).

In terms of domain architecture, Sm spans 10–69 (DPFLNILRKERIPVSIYLVNGIKLQGQIDSFDQYVVLLKNSVTQMVYKHAISTIVPAKAI).

This sequence belongs to the Hfq family. As to quaternary structure, homohexamer.

In terms of biological role, RNA chaperone that binds small regulatory RNA (sRNAs) and mRNAs to facilitate mRNA translational regulation in response to envelope stress, environmental stress and changes in metabolite concentrations. Also binds with high specificity to tRNAs. This Nitrosomonas europaea (strain ATCC 19718 / CIP 103999 / KCTC 2705 / NBRC 14298) protein is RNA-binding protein Hfq.